Here is a 382-residue protein sequence, read N- to C-terminus: Cytochrome b (382 aa).

Helical transmembrane passes span 33–53 (FGSL…FLAM), 77–98 (WLVR…YTHI), 113–133 (WTVG…GYVL), and 178–198 (FFAF…IHLL). Residues His-83 and His-97 each contribute to the heme b site. Residues His-182 and His-196 each coordinate heme b. His-201 contacts a ubiquinone. The next 4 membrane-spanning stretches (helical) occupy residues 226 to 246 (LKDL…ALLT), 288 to 308 (LGGV…PFLQ), 320 to 340 (LTQL…WIGG), and 347 to 367 (FVSI…IIIP).

This sequence belongs to the cytochrome b family. As to quaternary structure, the cytochrome bc1 complex contains 3 respiratory subunits (MT-CYB, CYC1 and UQCRFS1), 2 core proteins (UQCRC1 and UQCRC2) and probably 6 low-molecular weight proteins. Requires heme b as cofactor.

It localises to the mitochondrion inner membrane. Its function is as follows. Component of the ubiquinol-cytochrome c reductase complex (complex III or cytochrome b-c1 complex) that is part of the mitochondrial respiratory chain. The b-c1 complex mediates electron transfer from ubiquinol to cytochrome c. Contributes to the generation of a proton gradient across the mitochondrial membrane that is then used for ATP synthesis. The sequence is that of Cytochrome b (mt-cyb) from Sigmops gracilis (Slender fangjaw).